Consider the following 336-residue polypeptide: Fructose-1,6-bisphosphatase class 1 (336 aa).

Glu90, Asp112, Leu114, and Asp115 together coordinate Mg(2+). Substrate is bound by residues 115–118 (DGSS), Asn211, and Lys277. Mg(2+) is bound at residue Glu283.

The protein belongs to the FBPase class 1 family. Homotetramer. It depends on Mg(2+) as a cofactor.

The protein localises to the cytoplasm. The enzyme catalyses beta-D-fructose 1,6-bisphosphate + H2O = beta-D-fructose 6-phosphate + phosphate. Its pathway is carbohydrate biosynthesis; gluconeogenesis. This is Fructose-1,6-bisphosphatase class 1 from Pseudomonas aeruginosa (strain UCBPP-PA14).